The following is a 150-amino-acid chain: uncharacterized protein (150 aa).

This is an uncharacterized protein from Rickettsia prowazekii (strain Madrid E).